The sequence spans 510 residues: Serine carboxypeptidase-like 48 (510 aa).

Residues 1–25 form the signal peptide; the sequence is MDSKTTFLTFLLCIFIFSHFSPSTS. Disulfide bonds link C141/C383, C309/C326, and C349/C354. N-linked (GlcNAc...) asparagine glycosylation is found at N158 and N159. The active site involves S231. Residues D421 and H478 contribute to the active site.

This sequence belongs to the peptidase S10 family. In terms of tissue distribution, ubiquitous.

Its subcellular location is the secreted. Probable carboxypeptidase. This Arabidopsis thaliana (Mouse-ear cress) protein is Serine carboxypeptidase-like 48 (SCPL48).